Here is a 162-residue protein sequence, read N- to C-terminus: NADH-quinone oxidoreductase subunit I (162 aa).

2 4Fe-4S ferredoxin-type domains span residues 52–82 (LRRYPNGEERCIACKLCEAICPAQAITIEAG) and 93–122 (TRYDIDMVKCIYCGFCQEACPVDAIVEGPN). Residues cysteine 62, cysteine 65, cysteine 68, cysteine 72, cysteine 102, cysteine 105, cysteine 108, and cysteine 112 each coordinate [4Fe-4S] cluster.

This sequence belongs to the complex I 23 kDa subunit family. NDH-1 is composed of 14 different subunits. Subunits NuoA, H, J, K, L, M, N constitute the membrane sector of the complex. Requires [4Fe-4S] cluster as cofactor.

The protein resides in the cell inner membrane. It carries out the reaction a quinone + NADH + 5 H(+)(in) = a quinol + NAD(+) + 4 H(+)(out). In terms of biological role, NDH-1 shuttles electrons from NADH, via FMN and iron-sulfur (Fe-S) centers, to quinones in the respiratory chain. The immediate electron acceptor for the enzyme in this species is believed to be ubiquinone. Couples the redox reaction to proton translocation (for every two electrons transferred, four hydrogen ions are translocated across the cytoplasmic membrane), and thus conserves the redox energy in a proton gradient. This is NADH-quinone oxidoreductase subunit I from Xanthobacter autotrophicus (strain ATCC BAA-1158 / Py2).